A 94-amino-acid polypeptide reads, in one-letter code: MKILLLTLVVVTIMCLDLGYTTKCYKTGERIISETCPPGQDLCYMKTWCDVFCGSRGRVIELGCTATCPTVKPHEQITCCSTDNCNPHPKMKQR.

The first 21 residues, 1-21 (MKILLLTLVVVTIMCLDLGYT), serve as a signal peptide directing secretion. 5 disulfides stabilise this stretch: C24–C43, C36–C64, C49–C53, C68–C79, and C80–C85.

It belongs to the three-finger toxin family. Long-chain subfamily. Type II alpha-neurotoxin sub-subfamily. As to quaternary structure, monomer. In terms of tissue distribution, expressed by the venom gland.

Its subcellular location is the secreted. Functionally, binds with high affinity to muscular (alpha-1/CHRNA1) and neuronal (alpha-7/CHRNA7) nicotinic acetylcholine receptor (nAChR) and inhibits acetylcholine from binding to the receptor, thereby impairing neuromuscular and neuronal transmission. Recombinant LNTX1 leads to a functional block of the muscle-type acetylcholine receptors. Has a cytotoxic activity. The protein is Long neurotoxin LNTX1 of Ophiophagus hannah (King cobra).